The following is a 438-amino-acid chain: Aspartate--tRNA(Asp) ligase (438 aa).

Residue Glu-170 coordinates L-aspartate. The interval 192–195 is aspartate; sequence QLYK. An L-aspartate-binding site is contributed by Arg-214. ATP contacts are provided by residues 214–216, 222–224, and Glu-361; these read RAE and RHL. Mg(2+) is bound by residues Glu-361 and Ser-364. L-aspartate is bound by residues Ser-364 and Arg-368. 409 to 412 is a binding site for ATP; that stretch reads GAER.

The protein belongs to the class-II aminoacyl-tRNA synthetase family. Type 2 subfamily. As to quaternary structure, homodimer. Requires Mg(2+) as cofactor.

Its subcellular location is the cytoplasm. The catalysed reaction is tRNA(Asp) + L-aspartate + ATP = L-aspartyl-tRNA(Asp) + AMP + diphosphate. Its function is as follows. Catalyzes the attachment of L-aspartate to tRNA(Asp) in a two-step reaction: L-aspartate is first activated by ATP to form Asp-AMP and then transferred to the acceptor end of tRNA(Asp). The sequence is that of Aspartate--tRNA(Asp) ligase from Pyrococcus furiosus (strain ATCC 43587 / DSM 3638 / JCM 8422 / Vc1).